A 605-amino-acid chain; its full sequence is Isocitrate dehydrogenase kinase/phosphatase (605 aa).

ATP-binding positions include 327 to 333 (APGIKGL) and Lys-348. Residue Asp-383 is part of the active site.

Belongs to the AceK family.

The protein localises to the cytoplasm. It catalyses the reaction L-seryl-[isocitrate dehydrogenase] + ATP = O-phospho-L-seryl-[isocitrate dehydrogenase] + ADP + H(+). Bifunctional enzyme which can phosphorylate or dephosphorylate isocitrate dehydrogenase (IDH) on a specific serine residue. This is a regulatory mechanism which enables bacteria to bypass the Krebs cycle via the glyoxylate shunt in response to the source of carbon. When bacteria are grown on glucose, IDH is fully active and unphosphorylated, but when grown on acetate or ethanol, the activity of IDH declines drastically concomitant with its phosphorylation. The chain is Isocitrate dehydrogenase kinase/phosphatase from Burkholderia orbicola (strain AU 1054).